The chain runs to 194 residues: MRIVVGMSGASGAIYGIRILEALQRIGVETDLVMSDSAKRTIAYETDYSISDLKGLATCVHDINDVGASIASGSFRHAGMIIAPCSIKTLSAVANSFNTNLLIRAADVALKERRKLVLMLRETPLHLGHLRLMTQATENGAVLLPPLPAFYHRPKTLDDIINQSVTKVLDQFDLDVDLFGRWTGNEERELAKSR.

FMN is bound by residues 9–11 (GAS), Ser-35, 86–89 (SIKT), and Arg-121. The dimethylallyl phosphate site is built by Tyr-151 and Lys-167.

Belongs to the UbiX/PAD1 family.

The catalysed reaction is dimethylallyl phosphate + FMNH2 = prenylated FMNH2 + phosphate. In terms of biological role, involved in the carboxylation of phenylphosphate. Functionally, flavin prenyltransferase that catalyzes the synthesis of the prenylated FMN cofactor (prenyl-FMN) for 4-hydroxy-3-polyprenylbenzoic acid decarboxylase UbiD. The prenyltransferase is metal-independent and links a dimethylallyl moiety from dimethylallyl monophosphate (DMAP) to the flavin N5 and C6 atoms of FMN. This is Flavin prenyltransferase UbiX from Thauera aromatica.